Reading from the N-terminus, the 396-residue chain is Elongation factor Tu (396 aa).

Positions 10-206 constitute a tr-type G domain; it reads KPHCNIGTIG…AVDAYIPQPE (197 aa). Residues 19–26 form a G1 region; that stretch reads GHVDHGKT. 19–26 contacts GTP; it reads GHVDHGKT. T26 lines the Mg(2+) pocket. The segment at 60–64 is G2; sequence GITIS. The G3 stretch occupies residues 81-84; sequence DCPG. GTP contacts are provided by residues 81 to 85 and 136 to 139; these read DCPGH and NKCD. The interval 136-139 is G4; the sequence is NKCD. The segment at 174 to 176 is G5; the sequence is SAL.

This sequence belongs to the TRAFAC class translation factor GTPase superfamily. Classic translation factor GTPase family. EF-Tu/EF-1A subfamily. In terms of assembly, monomer.

It localises to the cytoplasm. The catalysed reaction is GTP + H2O = GDP + phosphate + H(+). Functionally, GTP hydrolase that promotes the GTP-dependent binding of aminoacyl-tRNA to the A-site of ribosomes during protein biosynthesis. The chain is Elongation factor Tu from Nitrobacter winogradskyi (strain ATCC 25391 / DSM 10237 / CIP 104748 / NCIMB 11846 / Nb-255).